Reading from the N-terminus, the 609-residue chain is 2',5'-phosphodiesterase 12 (609 aa).

The N-terminal 16 residues, 1-16, are a transit peptide targeting the mitochondrion; sequence MWRLPGVRAALRGVRT. The interval 203 to 231 is disordered; that stretch reads PRAAEPEGGGPSSSSPSSPSPGWTETGVD. The segment covering 214-224 has biased composition (low complexity); it reads SSSSPSSPSPG. Ser217 carries the phosphoserine modification. Mg(2+)-binding residues include Glu351, Asp496, and Asn498. The Proton donor/acceptor role is filled by Asp496.

It belongs to the CCR4/nocturin family. Mg(2+) serves as cofactor. Liver.

It is found in the mitochondrion matrix. The catalysed reaction is Exonucleolytic cleavage of poly(A) to 5'-AMP.. In terms of biological role, enzyme that cleaves 2',5'-phosphodiester bond linking adenosines of the 5'-triphosphorylated oligoadenylates, triphosphorylated oligoadenylates referred as 2-5A modulates the 2-5A system. Degrades triphosphorylated 2-5A to produce AMP and ATP. Also cleaves 3',5'-phosphodiester bond of oligoadenylates. Plays a role as a negative regulator of the 2-5A system that is one of the major pathways for antiviral and antitumor functions induced by interferons (IFNs). Suppression of this enzyme increases cellular 2-5A levels and decreases viral replication in cultured small-airway epithelial cells. The polypeptide is 2',5'-phosphodiesterase 12 (PDE12) (Bos taurus (Bovine)).